The primary structure comprises 290 residues: Glutamate 5-kinase (290 aa).

ATP is bound at residue K21. Substrate contacts are provided by S60, D151, and N163. Residue 217 to 223 participates in ATP binding; sequence TGGMFTK.

The protein belongs to the glutamate 5-kinase family.

The protein resides in the cytoplasm. It carries out the reaction L-glutamate + ATP = L-glutamyl 5-phosphate + ADP. The protein operates within amino-acid biosynthesis; L-proline biosynthesis; L-glutamate 5-semialdehyde from L-glutamate: step 1/2. Functionally, catalyzes the transfer of a phosphate group to glutamate to form L-glutamate 5-phosphate. The chain is Glutamate 5-kinase from Leptospira interrogans serogroup Icterohaemorrhagiae serovar copenhageni (strain Fiocruz L1-130).